Consider the following 391-residue polypeptide: Phosphoprotein (391 aa).

Residues T10, T16, and T39 each carry the phosphothreonine modification. The segment covering K55–Q65 has biased composition (polar residues). The segment at K55–G90 is disordered. S69 is modified (phosphoserine). Phosphothreonine occurs at positions 91, 150, and 165. Residues T145–V208 form a disordered region. S188 bears the Phosphoserine mark. The interval I216–G279 is multimerization. Positions A218 to Q245 form a coiled coil. T250 bears the Phosphothreonine mark. S257 is modified (phosphoserine). Phosphothreonine is present on residues T258 and T282. A phosphoserine mark is found at S292 and S294. A Phosphothreonine modification is found at T298. Phosphoserine occurs at positions 301 and 374. The interaction with the nucleoprotein stretch occupies residues A343 to I391. Residue T375 is modified to Phosphothreonine.

The protein belongs to the rubulavirus/avulavirus P protein family. Homotetramer. Interacts (via multimerization domain) with polymerase L; this interaction forms the polymerase L-P complex. Interacts (via N-terminus) with N0 (via Ncore); this interaction allows P to chaperon N0 to avoid N polymerization before encapsidation. Interacts (via C-terminus) with N-RNA template; this interaction positions the polymerase on the template for both transcription and replication. Interacts with host RPS6KB1 kinase; this interaction may play a role in the viral replication and transcription.

Functionally, essential cofactor of the RNA polymerase L that plays a central role in the transcription and replication by forming the polymerase complex with RNA polymerase L and recruiting L to the genomic N-RNA template for RNA synthesis. Also plays a central role in the encapsidation of nascent RNA chains by forming the encapsidation complex with the nucleocapsid protein N (N-P complex). Acts as a chaperone for newly synthesized free N protein, so-called N0, allowing encapsidation of nascent RNA chains during replication. The nucleoprotein protein N prevents excessive phosphorylation of P, which leads to down-regulation of viral transcription/ replication. Participates, together with N, in the formation of viral factories (viroplasms), which are large inclusions in the host cytoplasm where replication takes place. The sequence is that of Phosphoprotein from Mumps virus genotype B (strain Miyahara vaccine) (MuV).